The chain runs to 170 residues: Lipoprotein signal peptidase (170 aa).

Transmembrane regions (helical) follow at residues 13-33, 72-92, and 96-113; these read IFIS…VKYI, LFFL…ALKE, and IARI…GNII. Catalysis depends on residues D124 and D146. The chain crosses the membrane as a helical span at residues 142–162; sequence FNFADSYVVIGITLFIIYDLF.

It belongs to the peptidase A8 family.

It localises to the cell inner membrane. It catalyses the reaction Release of signal peptides from bacterial membrane prolipoproteins. Hydrolyzes -Xaa-Yaa-Zaa-|-(S,diacylglyceryl)Cys-, in which Xaa is hydrophobic (preferably Leu), and Yaa (Ala or Ser) and Zaa (Gly or Ala) have small, neutral side chains.. It participates in protein modification; lipoprotein biosynthesis (signal peptide cleavage). Functionally, this protein specifically catalyzes the removal of signal peptides from prolipoproteins. The protein is Lipoprotein signal peptidase of Borrelia turicatae (strain 91E135).